Reading from the N-terminus, the 308-residue chain is Ribonuclease HIII (308 aa).

Positions 91–308 constitute an RNase H type-2 domain; that stretch reads KNVIGSDEVG…TEKALKMVKK (218 aa). D97, E98, and D202 together coordinate a divalent metal cation.

The protein belongs to the RNase HII family. RnhC subfamily. Mn(2+) is required as a cofactor. Mg(2+) serves as cofactor.

Its subcellular location is the cytoplasm. The catalysed reaction is Endonucleolytic cleavage to 5'-phosphomonoester.. In terms of biological role, endonuclease that specifically degrades the RNA of RNA-DNA hybrids. This chain is Ribonuclease HIII, found in Listeria monocytogenes serotype 4b (strain CLIP80459).